The chain runs to 480 residues: Islet cell autoantigen 1 (480 aa).

The 204-residue stretch at 50–253 (ASDADLDAKL…TSHTMAAIHE (204 aa)) folds into the AH domain. Composition is skewed to basic and acidic residues over residues 276 to 293 (LVEKEKKKSSRRENREAV) and 306 to 321 (ENQHKESSTCQKEEGK). Disordered regions lie at residues 276–338 (LVEK…ACSG) and 400–421 (LKEPAPMGAQGEPDPKPQIGSA).

It is found in the cytoplasm. The protein localises to the cytosol. Its subcellular location is the golgi apparatus membrane. The protein resides in the cytoplasmic vesicle. It localises to the secretory vesicle membrane. It is found in the secretory vesicle. The protein localises to the synaptic vesicle membrane. May play a role in neurotransmitter secretion. The protein is Islet cell autoantigen 1 of Rattus norvegicus (Rat).